The chain runs to 248 residues: UPF0736 protein BC_1176 (248 aa).

The protein belongs to the UPF0736 family.

In Bacillus cereus (strain ATCC 14579 / DSM 31 / CCUG 7414 / JCM 2152 / NBRC 15305 / NCIMB 9373 / NCTC 2599 / NRRL B-3711), this protein is UPF0736 protein BC_1176.